The following is a 127-amino-acid chain: Small ribosomal subunit protein uS13 (127 aa).

The interval 99–127 is disordered; sequence RGQRTRTNARTRRGRRGQAIGIKKKTLKK.

This sequence belongs to the universal ribosomal protein uS13 family. As to quaternary structure, part of the 30S ribosomal subunit. Forms a loose heterodimer with protein S19. Forms two bridges to the 50S subunit in the 70S ribosome.

Located at the top of the head of the 30S subunit, it contacts several helices of the 16S rRNA. In the 70S ribosome it contacts the 23S rRNA (bridge B1a) and protein L5 of the 50S subunit (bridge B1b), connecting the 2 subunits; these bridges are implicated in subunit movement. Contacts the tRNAs in the A and P-sites. The polypeptide is Small ribosomal subunit protein uS13 (Roseiflexus castenholzii (strain DSM 13941 / HLO8)).